The following is a 304-amino-acid chain: Probable intron-encoded endonuclease 1 (304 aa).

A GIY-YIG domain is found at 84 to 175; the sequence is DKGGIYSFIN…RFNFDNLYNF (92 aa).

The protein to endonucleases of group I introns of fungi and phage.

The protein resides in the mitochondrion. In terms of biological role, mitochondrial DNA endonuclease involved in intron homing. This is Probable intron-encoded endonuclease 1 from Neurospora crassa (strain ATCC 24698 / 74-OR23-1A / CBS 708.71 / DSM 1257 / FGSC 987).